A 20-amino-acid polypeptide reads, in one-letter code: Thylakoid lumenal 14.7 kDa protein (20 aa).

A disordered region spans residues 1-20; sequence KTGVNKPELLPKEETTVIDV. Residues 9–20 show a composition bias toward basic and acidic residues; that stretch reads LLPKEETTVIDV.

The protein localises to the plastid. It localises to the chloroplast thylakoid lumen. This chain is Thylakoid lumenal 14.7 kDa protein, found in Spinacia oleracea (Spinach).